A 339-amino-acid polypeptide reads, in one-letter code: Ketol-acid reductoisomerase (NADP(+)) (339 aa).

Residues 1-182 form the KARI N-terminal Rossmann domain; that stretch reads MRVYYDRDAD…GGGRSGIIET (182 aa). Residues 24–27, Lys48, Ser51, Thr53, and 83–86 contribute to the NADP(+) site; these read YGSQ and DELQ. The active site involves His108. Position 134 (Gly134) interacts with NADP(+). The KARI C-terminal knotted domain maps to 183 to 328; that stretch reads NFREECETDL…AKLRGMMPWI (146 aa). Residues Asp191, Glu195, Glu227, and Glu231 each coordinate Mg(2+). Ser252 contacts substrate.

This sequence belongs to the ketol-acid reductoisomerase family. Requires Mg(2+) as cofactor.

The enzyme catalyses (2R)-2,3-dihydroxy-3-methylbutanoate + NADP(+) = (2S)-2-acetolactate + NADPH + H(+). It catalyses the reaction (2R,3R)-2,3-dihydroxy-3-methylpentanoate + NADP(+) = (S)-2-ethyl-2-hydroxy-3-oxobutanoate + NADPH + H(+). Its pathway is amino-acid biosynthesis; L-isoleucine biosynthesis; L-isoleucine from 2-oxobutanoate: step 2/4. It participates in amino-acid biosynthesis; L-valine biosynthesis; L-valine from pyruvate: step 2/4. Involved in the biosynthesis of branched-chain amino acids (BCAA). Catalyzes an alkyl-migration followed by a ketol-acid reduction of (S)-2-acetolactate (S2AL) to yield (R)-2,3-dihydroxy-isovalerate. In the isomerase reaction, S2AL is rearranged via a Mg-dependent methyl migration to produce 3-hydroxy-3-methyl-2-ketobutyrate (HMKB). In the reductase reaction, this 2-ketoacid undergoes a metal-dependent reduction by NADPH to yield (R)-2,3-dihydroxy-isovalerate. This Rhizobium johnstonii (strain DSM 114642 / LMG 32736 / 3841) (Rhizobium leguminosarum bv. viciae) protein is Ketol-acid reductoisomerase (NADP(+)).